We begin with the raw amino-acid sequence, 252 residues long: Large ribosomal subunit protein uL3 (252 aa).

Gln169 carries the N5-methylglutamine modification.

Belongs to the universal ribosomal protein uL3 family. As to quaternary structure, part of the 50S ribosomal subunit. Forms a cluster with proteins L14 and L19. In terms of processing, methylated by PrmB.

Functionally, one of the primary rRNA binding proteins, it binds directly near the 3'-end of the 23S rRNA, where it nucleates assembly of the 50S subunit. This Hyphomonas neptunium (strain ATCC 15444) protein is Large ribosomal subunit protein uL3.